The primary structure comprises 209 residues: Ribosomal RNA large subunit methyltransferase E (209 aa).

S-adenosyl-L-methionine is bound by residues G63, W65, D83, D99, and D124. Catalysis depends on K164, which acts as the Proton acceptor.

It belongs to the class I-like SAM-binding methyltransferase superfamily. RNA methyltransferase RlmE family.

Its subcellular location is the cytoplasm. The enzyme catalyses uridine(2552) in 23S rRNA + S-adenosyl-L-methionine = 2'-O-methyluridine(2552) in 23S rRNA + S-adenosyl-L-homocysteine + H(+). Functionally, specifically methylates the uridine in position 2552 of 23S rRNA at the 2'-O position of the ribose in the fully assembled 50S ribosomal subunit. The chain is Ribosomal RNA large subunit methyltransferase E from Shewanella loihica (strain ATCC BAA-1088 / PV-4).